The following is a 151-amino-acid chain: MAARLLSLCARRLSVTAAVRGLPAAGVRWESSRAVISPSTVERKRQRQPTMHWQEDPESEDENVYAKNPDFHGYDQDPVVDVWNMRVVFFFGFSIVLVLGTTFMAYLPDYRMQEWARREAERLVKYREANGLPIMESNCFDPSKIQLPEDE.

A mitochondrion-targeting transit peptide spans 1–29 (MAARLLSLCARRLSVTAAVRGLPAAGVRW). The tract at residues 39–62 (STVERKRQRQPTMHWQEDPESEDE) is disordered. Residues 87–107 (VVFFFGFSIVLVLGTTFMAYL) form a helical membrane-spanning segment.

It belongs to the complex I NDUFB11 subunit family. In terms of assembly, complex I is composed of 45 different subunits. Interacts with BCAP31.

Its subcellular location is the mitochondrion inner membrane. Its function is as follows. Accessory subunit of the mitochondrial membrane respiratory chain NADH dehydrogenase (Complex I), that is believed not to be involved in catalysis. Complex I functions in the transfer of electrons from NADH to the respiratory chain. The immediate electron acceptor for the enzyme is believed to be ubiquinone. This Cricetulus griseus (Chinese hamster) protein is NADH dehydrogenase [ubiquinone] 1 beta subcomplex subunit 11, mitochondrial (NDUFB11).